Consider the following 265-residue polypeptide: Speedy protein E8 (265 aa).

Positions 1–80 (MGQILGKIMM…EPEKELAPEP (80 aa)) are disordered. Over residues 66-80 (DESDDEPEKELAPEP) the composition is skewed to acidic residues.

This sequence belongs to the Speedy/Ringo family.

The sequence is that of Speedy protein E8 from Homo sapiens (Human).